The primary structure comprises 370 residues: MRVKEQLLTLRAYVPGKNIEEVKREYGLSKIVKLASNENPFGCSARVTEALTSLASQYALYPDGHAFELRTQVAKHLGVKAEQLLFGSGLDEVIQMISRALLHEGTNVVMANPTFSQYHHHAVIEGAEVREVSLKDGIHDLDAMLQQVDDQTKIVWICNPNNPTGTYVEKQKLLSFLESVPKSALVIMDEAYYEYAGAEDYPQTLPLLEKYENLMVLRTFSKAYGLAAFRIGYAVGNTELIGQLEVARLPFNTSTVAQSVALAALEDQAFLQECVKKNEEGLHQYYAFCKEYNVFYYPSQTNFIFLKLGIPGNEAFERLMKKGYIVRSGAAFGIDDGIRITVGLKEENDEIIELLKELVNEQVQKEETYS.

Residue lysine 222 is modified to N6-(pyridoxal phosphate)lysine.

It belongs to the class-II pyridoxal-phosphate-dependent aminotransferase family. Histidinol-phosphate aminotransferase subfamily. Homodimer. Pyridoxal 5'-phosphate serves as cofactor.

It catalyses the reaction L-histidinol phosphate + 2-oxoglutarate = 3-(imidazol-4-yl)-2-oxopropyl phosphate + L-glutamate. Its pathway is amino-acid biosynthesis; L-histidine biosynthesis; L-histidine from 5-phospho-alpha-D-ribose 1-diphosphate: step 7/9. The polypeptide is Histidinol-phosphate aminotransferase 1 (hisC1) (Bacillus anthracis).